Consider the following 180-residue polypeptide: 3-phenylpropionate/cinnamic acid dioxygenase subunit beta (180 aa).

Belongs to the bacterial ring-hydroxylating dioxygenase beta subunit family. As to quaternary structure, this dioxygenase system consists of four proteins: the two subunits of the hydroxylase component (HcaE and HcaF), a ferredoxin (HcaC) and a ferredoxin reductase (HcaD).

The catalysed reaction is 3-phenylpropanoate + NADH + O2 + H(+) = 3-(cis-5,6-dihydroxycyclohexa-1,3-dien-1-yl)propanoate + NAD(+). It catalyses the reaction (E)-cinnamate + NADH + O2 + H(+) = (2E)-3-(cis-5,6-dihydroxycyclohexa-1,3-dien-1-yl)prop-2-enoate + NAD(+). The protein operates within aromatic compound metabolism; 3-phenylpropanoate degradation. In terms of biological role, part of the multicomponent 3-phenylpropionate dioxygenase. Converts 3-phenylpropionic acid (PP) and cinnamic acid (CI) into 3-phenylpropionate-dihydrodiol (PP-dihydrodiol) and cinnamic acid-dihydrodiol (CI-dihydrodiol), respectively. This is 3-phenylpropionate/cinnamic acid dioxygenase subunit beta from Photorhabdus laumondii subsp. laumondii (strain DSM 15139 / CIP 105565 / TT01) (Photorhabdus luminescens subsp. laumondii).